A 257-amino-acid polypeptide reads, in one-letter code: Ribosomal RNA small subunit methyltransferase J (257 aa).

S-adenosyl-L-methionine is bound by residues 107 to 108 (RD), 123 to 124 (ER), and D177.

Belongs to the methyltransferase superfamily. RsmJ family.

The protein resides in the cytoplasm. The enzyme catalyses guanosine(1516) in 16S rRNA + S-adenosyl-L-methionine = N(2)-methylguanosine(1516) in 16S rRNA + S-adenosyl-L-homocysteine + H(+). Functionally, specifically methylates the guanosine in position 1516 of 16S rRNA. This is Ribosomal RNA small subunit methyltransferase J from Haemophilus influenzae (strain PittGG).